The following is a 430-amino-acid chain: Glutamate-1-semialdehyde 2,1-aminomutase (430 aa).

Lys-267 carries the N6-(pyridoxal phosphate)lysine modification.

Belongs to the class-III pyridoxal-phosphate-dependent aminotransferase family. HemL subfamily. As to quaternary structure, homodimer. It depends on pyridoxal 5'-phosphate as a cofactor.

The protein localises to the cytoplasm. The catalysed reaction is (S)-4-amino-5-oxopentanoate = 5-aminolevulinate. It participates in porphyrin-containing compound metabolism; protoporphyrin-IX biosynthesis; 5-aminolevulinate from L-glutamyl-tRNA(Glu): step 2/2. The polypeptide is Glutamate-1-semialdehyde 2,1-aminomutase (Desulfotalea psychrophila (strain LSv54 / DSM 12343)).